Here is a 124-residue protein sequence, read N- to C-terminus: Fluoride-specific ion channel FluC (124 aa).

The next 4 membrane-spanning stretches (helical) occupy residues M1–A21, T38–I58, G69–V89, and L99–L119. Na(+) contacts are provided by G76 and T79.

It belongs to the fluoride channel Fluc/FEX (TC 1.A.43) family.

The protein localises to the cell inner membrane. It catalyses the reaction fluoride(in) = fluoride(out). With respect to regulation, na(+) is not transported, but it plays an essential structural role and its presence is essential for fluoride channel function. Fluoride-specific ion channel. Important for reducing fluoride concentration in the cell, thus reducing its toxicity. This chain is Fluoride-specific ion channel FluC, found in Pseudomonas fluorescens (strain Pf0-1).